Here is a 137-residue protein sequence, read N- to C-terminus: Ribosome-binding factor A (137 aa).

It belongs to the RbfA family. As to quaternary structure, monomer. Binds 30S ribosomal subunits, but not 50S ribosomal subunits or 70S ribosomes.

The protein resides in the cytoplasm. In terms of biological role, one of several proteins that assist in the late maturation steps of the functional core of the 30S ribosomal subunit. Associates with free 30S ribosomal subunits (but not with 30S subunits that are part of 70S ribosomes or polysomes). Required for efficient processing of 16S rRNA. May interact with the 5'-terminal helix region of 16S rRNA. The sequence is that of Ribosome-binding factor A from Shewanella amazonensis (strain ATCC BAA-1098 / SB2B).